The chain runs to 354 residues: Uroporphyrinogen decarboxylase (354 aa).

Substrate-binding positions include 35–39 (RQAGR), D84, Y159, S214, and H333.

Belongs to the uroporphyrinogen decarboxylase family. As to quaternary structure, homodimer.

The protein resides in the cytoplasm. It carries out the reaction uroporphyrinogen III + 4 H(+) = coproporphyrinogen III + 4 CO2. It functions in the pathway porphyrin-containing compound metabolism; protoporphyrin-IX biosynthesis; coproporphyrinogen-III from 5-aminolevulinate: step 4/4. Catalyzes the decarboxylation of four acetate groups of uroporphyrinogen-III to yield coproporphyrinogen-III. In Nocardia farcinica (strain IFM 10152), this protein is Uroporphyrinogen decarboxylase.